A 1056-amino-acid chain; its full sequence is Carbamoyl phosphate synthase large chain (1056 aa).

Residues 1–397 (MPRRTDIKKV…GFKKALRSID (397 aa)) are carboxyphosphate synthetic domain. 12 residues coordinate ATP: arginine 127, arginine 167, glycine 173, glycine 174, glutamate 206, valine 208, glutamate 213, glycine 239, valine 240, histidine 241, glutamine 282, and glutamate 294. Positions 131–323 (KALMQKIGEP…IARVAAKIAI (193 aa)) constitute an ATP-grasp 1 domain. Mg(2+) contacts are provided by glutamine 282, glutamate 294, and asparagine 296. 3 residues coordinate Mn(2+): glutamine 282, glutamate 294, and asparagine 296. Residues 398–530 (TDINTHTNHN…YSTHGVTTDI (133 aa)) are oligomerization domain. Residues 531-919 (IQNDKKKVLI…YKACISADNE (389 aa)) are carbamoyl phosphate synthetic domain. In terms of domain architecture, ATP-grasp 2 spans 661-852 (SELLDALKIP…LAKVAAKVMI (192 aa)). Arginine 697, serine 736, leucine 738, glutamate 743, glycine 768, valine 769, histidine 770, serine 771, glutamine 811, and glutamate 823 together coordinate ATP. 3 residues coordinate Mg(2+): glutamine 811, glutamate 823, and asparagine 825. Residues glutamine 811, glutamate 823, and asparagine 825 each coordinate Mn(2+). The MGS-like domain occupies 918-1056 (NELPIEGNVF…PISHYLSEVE (139 aa)). Residues 920-1056 (LPIEGNVFIS…PISHYLSEVE (137 aa)) form an allosteric domain region.

Belongs to the CarB family. Composed of two chains; the small (or glutamine) chain promotes the hydrolysis of glutamine to ammonia, which is used by the large (or ammonia) chain to synthesize carbamoyl phosphate. Tetramer of heterodimers (alpha,beta)4. Mg(2+) serves as cofactor. The cofactor is Mn(2+).

It catalyses the reaction hydrogencarbonate + L-glutamine + 2 ATP + H2O = carbamoyl phosphate + L-glutamate + 2 ADP + phosphate + 2 H(+). The enzyme catalyses hydrogencarbonate + NH4(+) + 2 ATP = carbamoyl phosphate + 2 ADP + phosphate + 2 H(+). The protein operates within amino-acid biosynthesis; L-arginine biosynthesis; carbamoyl phosphate from bicarbonate: step 1/1. It functions in the pathway pyrimidine metabolism; UMP biosynthesis via de novo pathway; (S)-dihydroorotate from bicarbonate: step 1/3. Large subunit of the glutamine-dependent carbamoyl phosphate synthetase (CPSase). CPSase catalyzes the formation of carbamoyl phosphate from the ammonia moiety of glutamine, carbonate, and phosphate donated by ATP, constituting the first step of 2 biosynthetic pathways, one leading to arginine and/or urea and the other to pyrimidine nucleotides. The large subunit (synthetase) binds the substrates ammonia (free or transferred from glutamine from the small subunit), hydrogencarbonate and ATP and carries out an ATP-coupled ligase reaction, activating hydrogencarbonate by forming carboxy phosphate which reacts with ammonia to form carbamoyl phosphate. This is Carbamoyl phosphate synthase large chain from Methanosphaerula palustris (strain ATCC BAA-1556 / DSM 19958 / E1-9c).